A 301-amino-acid polypeptide reads, in one-letter code: uncharacterized protein (301 aa).

The Radical SAM core domain occupies 45 to 286 (KELSDGWALN…EELGKMFTEL (242 aa)).

This is an uncharacterized protein from Acidianus two-tailed virus (ATV).